We begin with the raw amino-acid sequence, 233 residues long: Cytochrome c biogenesis ATP-binding export protein CcmA (233 aa).

Residues 17 to 233 (FAGEDLLCVR…AAGLFLEDEG (217 aa)) enclose the ABC transporter domain. ATP is bound at residue 49–56 (GPNGSGKS).

This sequence belongs to the ABC transporter superfamily. CcmA exporter (TC 3.A.1.107) family. The complex is composed of two ATP-binding proteins (CcmA) and two transmembrane proteins (CcmB).

It localises to the cell inner membrane. The enzyme catalyses heme b(in) + ATP + H2O = heme b(out) + ADP + phosphate + H(+). Part of the ABC transporter complex CcmAB involved in the biogenesis of c-type cytochromes; once thought to export heme, this seems not to be the case, but its exact role is uncertain. Responsible for energy coupling to the transport system. The protein is Cytochrome c biogenesis ATP-binding export protein CcmA of Rhodospirillum rubrum (strain ATCC 11170 / ATH 1.1.1 / DSM 467 / LMG 4362 / NCIMB 8255 / S1).